Consider the following 220-residue polypeptide: Homeobox-leucine zipper protein ATHB-21 (220 aa).

Residues 26 to 48 form a disordered region; that stretch reads VPQQGGEAKPTRRRKRKSKSVVV. The homeobox DNA-binding region spans 58–117; sequence GWFRKRKLSDEQVRMLEISFEDDHKLESERKDRLASELGLDPRQVAVWFQNRRARWKNKR. The interval 118–146 is leucine-zipper; it reads VEDEYTKLKNAYETTVVEKCRLDSEVIHL.

This sequence belongs to the HD-ZIP homeobox family. Class I subfamily. Widely expressed.

The protein resides in the nucleus. Its function is as follows. Probable transcription factor. This chain is Homeobox-leucine zipper protein ATHB-21 (ATHB-21), found in Arabidopsis thaliana (Mouse-ear cress).